Here is a 136-residue protein sequence, read N- to C-terminus: Large ribosomal subunit protein bL19 (136 aa).

The protein belongs to the bacterial ribosomal protein bL19 family.

Functionally, this protein is located at the 30S-50S ribosomal subunit interface and may play a role in the structure and function of the aminoacyl-tRNA binding site. The sequence is that of Large ribosomal subunit protein bL19 from Xylella fastidiosa (strain 9a5c).